A 150-amino-acid chain; its full sequence is Ankyrin repeat protein C18/B24 (150 aa).

One copy of the ANK repeat lies at glutamate 41 to serine 73.

This chain is Ankyrin repeat protein C18/B24, found in Vaccinia virus (strain Copenhagen) (VACV).